Consider the following 631-residue polypeptide: Phosphomethylpyrimidine synthase (631 aa).

Residues Asn239, Met268, Tyr297, His333, 353 to 355 (SRG), 394 to 397 (DGLR), and Glu433 contribute to the substrate site. His437 is a Zn(2+) binding site. Tyr460 serves as a coordination point for substrate. Zn(2+) is bound at residue His501. The [4Fe-4S] cluster site is built by Cys581, Cys584, and Cys589.

It belongs to the ThiC family. In terms of assembly, homodimer. The cofactor is [4Fe-4S] cluster.

The enzyme catalyses 5-amino-1-(5-phospho-beta-D-ribosyl)imidazole + S-adenosyl-L-methionine = 4-amino-2-methyl-5-(phosphooxymethyl)pyrimidine + CO + 5'-deoxyadenosine + formate + L-methionine + 3 H(+). It functions in the pathway cofactor biosynthesis; thiamine diphosphate biosynthesis. Catalyzes the synthesis of the hydroxymethylpyrimidine phosphate (HMP-P) moiety of thiamine from aminoimidazole ribotide (AIR) in a radical S-adenosyl-L-methionine (SAM)-dependent reaction. This is Phosphomethylpyrimidine synthase from Salmonella paratyphi C (strain RKS4594).